Here is a 95-residue protein sequence, read N- to C-terminus: Small ribosomal subunit protein bS6 (95 aa).

Belongs to the bacterial ribosomal protein bS6 family.

In terms of biological role, binds together with bS18 to 16S ribosomal RNA. The chain is Small ribosomal subunit protein bS6 from Clostridium perfringens (strain ATCC 13124 / DSM 756 / JCM 1290 / NCIMB 6125 / NCTC 8237 / Type A).